The following is a 42-amino-acid chain: CSRSDGWCGKTEDCCCPMKCIKAWYKQNGNCQNTISAIWKNC.

Cystine bridges form between cysteine 1/cysteine 15, cysteine 8/cysteine 20, cysteine 14/cysteine 31, and cysteine 16/cysteine 42.

This sequence belongs to the neurotoxin 06 (delta-actx) family. In terms of tissue distribution, expressed by the venom gland.

The protein localises to the secreted. Functionally, lethal neurotoxin. Slows the inactivation of tetrodotoxin-sensitive voltage-gated sodium channels (Nav) by binding to site 3 of the channel, resulting in repetitive firing in autonomic and motor nerve fibers. The sequence is that of Delta-hexatoxin-Hv1b from Hadronyche versuta (Blue mountains funnel-web spider).